Consider the following 638-residue polypeptide: E3 ubiquitin-protein ligase TRIM47 (638 aa).

Methionine 1 bears the N-acetylmethionine mark. Residues 9-58 (CPICLEPLREPVTLPCGHNFCLACLGALWPHRGASGAGGPGGAARCPLCQ) form an RING-type zinc finger. Threonine 72 is subject to Phosphothreonine. Residues 79–119 (LRQGSGPGSGPGPAPALAPEPSAPSALPSVPEPSAPCAPEP) form a disordered region. 2 stretches are compositionally biased toward pro residues: residues 88–100 (GPGP…PEPS) and 108–119 (VPEPSAPCAPEP). A B box-type zinc finger spans residues 177–217 (LEESLCPRHLRPLERYCRAERVCLCEACAAQEHRGHELVPL). Residues cysteine 182, histidine 185, cysteine 204, and histidine 209 each coordinate Zn(2+). Positions 296 to 324 (MLGRSQGDLRRQEEQRSRLSRARQNLSQV) form a coiled coil. 2 disordered regions span residues 300–322 (SQGD…QNLS) and 384–411 (LRGP…LEST). Residues 302-312 (GDLRRQEEQRS) show a composition bias toward basic and acidic residues. The B30.2/SPRY domain maps to 410–631 (STNLLESEAP…LQIGPLKKSC (222 aa)). Position 461 is a phosphoserine (serine 461). At arginine 582 the chain carries Omega-N-methylarginine. At serine 588 the chain carries Phosphoserine.

Belongs to the TRIM/RBCC family. In terms of tissue distribution, low expression in most tissues. Higher expression in kidney tubular cells. Overexpressed in astrocytoma tumor cells.

Its subcellular location is the cytoplasm. The protein localises to the nucleus. It catalyses the reaction S-ubiquitinyl-[E2 ubiquitin-conjugating enzyme]-L-cysteine + [acceptor protein]-L-lysine = [E2 ubiquitin-conjugating enzyme]-L-cysteine + N(6)-ubiquitinyl-[acceptor protein]-L-lysine.. It functions in the pathway protein modification; protein ubiquitination. Functionally, E3 ubiquitin-protein ligase that mediates the ubiquitination and proteasomal degradation of CYLD. This is E3 ubiquitin-protein ligase TRIM47 from Homo sapiens (Human).